We begin with the raw amino-acid sequence, 454 residues long: T-box protein VegT (454 aa).

The T-box DNA-binding region spans 57–230 (LWSQFHQEGT…HNPFAKGFRE (174 aa)). Residues 229 to 241 (REQERSHKRDDVL) show a composition bias toward basic and acidic residues. 2 disordered regions span residues 229-274 (REQE…ATRV) and 295-358 (ANQG…VPDS). Over residues 308–325 (GVNQEQQVPTSSLNFYNK) the composition is skewed to polar residues.

In terms of assembly, forms a repression complex on the promoters of the nodal/nr1 and siamois genes with the maternal factors tcf7l1/tcf3 and pouf5.1/oct-25. Interacts (via C-terminus) with tcf7l1/tcf3 (via N-terminus). Also interacts with the other POU-domain transcription factors pou5f1.2/oct-91 and pou5f1.3/oct-60.

It is found in the nucleus. In terms of biological role, transcription factor required for both mesoderm and endoderm formation in the embryo; signaling determinants and concentration levels may determine which germ layer is formed. Acts together with beta-catenin to activate genes that are responsible for mesoderm induction including wnt-8, eomes t/bra, siamois, mix1 and sox17. Directly binds to promoter DNA. Patterns the mesoderm along the dorsoventral and posterior axis. Activates siamois gene transcription when alone or in combination with beta-catenin, but inhibits siamois transcription in combination with pou5f1.1/oct-25. The sequence is that of T-box protein VegT from Xenopus borealis (Kenyan clawed frog).